A 351-amino-acid polypeptide reads, in one-letter code: 2-Hydroxyacid oxidase 2 (351 aa).

Residues 2 to 351 (SLVCLTDFQA…NRNLVQFSRL (350 aa)) form the FMN hydroxy acid dehydrogenase domain. FMN is bound by residues 77-79 (PTG), serine 106, and glutamine 128. Position 130 (tyrosine 130) interacts with a 2-oxocarboxylate. Threonine 156 contributes to the FMN binding site. Residue arginine 165 coordinates a 2-oxocarboxylate. Threonine 178 is modified (phosphothreonine). Lysine 222 provides a ligand contact to FMN. Residue histidine 246 is the Proton acceptor of the active site. Residue arginine 249 coordinates a 2-oxocarboxylate. Residues 277–281 (DGGVR) and 300–301 (GR) each bind FMN. The Microbody targeting signal signature appears at 349–351 (SRL).

The protein belongs to the FMN-dependent alpha-hydroxy acid dehydrogenase family. As to quaternary structure, homotetramer. Requires FMN as cofactor. As to expression, expressed in the liver and kidney.

It localises to the peroxisome. It catalyses the reaction a (2S)-2-hydroxycarboxylate + O2 = a 2-oxocarboxylate + H2O2. It carries out the reaction 2-hydroxyhexadecanoate + O2 = 2-oxohexadecanoate + H2O2. The catalysed reaction is 2-hydroxyoctanoate + O2 = 2-oxooctanoate + H2O2. It participates in lipid metabolism; fatty acid metabolism. Its function is as follows. Oxidase that catalyzes the oxidation of medium and long chain hydroxyacids such as 2-hydroxyhexadecanoate and 2-hydroxyoctanoate, to the correspondong 2-oxoacids. Its role in the oxidation of 2-hydroxy fatty acids may contribute to the general pathway of fatty acid alpha-oxidation. Active in vitro with the artificial electron acceptor 2,6-dichlorophenolindophenol (DCIP), but O2 is believed to be the physiological electron acceptor, leading to the production of H2O2. Is not active on glycolate, glyoxylate, L-lactate and 2-hydroxybutanoate. In Homo sapiens (Human), this protein is 2-Hydroxyacid oxidase 2 (HAO2).